Here is a 232-residue protein sequence, read N- to C-terminus: 2,3,4,5-tetrahydropyridine-2,6-dicarboxylate N-acetyltransferase (232 aa).

It belongs to the transferase hexapeptide repeat family. DapH subfamily.

It catalyses the reaction (S)-2,3,4,5-tetrahydrodipicolinate + acetyl-CoA + H2O = L-2-acetamido-6-oxoheptanedioate + CoA. Its pathway is amino-acid biosynthesis; L-lysine biosynthesis via DAP pathway; LL-2,6-diaminopimelate from (S)-tetrahydrodipicolinate (acetylase route): step 1/3. Functionally, catalyzes the transfer of an acetyl group from acetyl-CoA to tetrahydrodipicolinate. The polypeptide is 2,3,4,5-tetrahydropyridine-2,6-dicarboxylate N-acetyltransferase (Streptococcus mutans serotype c (strain ATCC 700610 / UA159)).